Reading from the N-terminus, the 201-residue chain is Recombination protein RecR (201 aa).

A C4-type zinc finger spans residues cysteine 59–cysteine 74. One can recognise a Toprim domain in the interval arginine 82–proline 177.

This sequence belongs to the RecR family.

May play a role in DNA repair. It seems to be involved in an RecBC-independent recombinational process of DNA repair. It may act with RecF and RecO. This chain is Recombination protein RecR, found in Hahella chejuensis (strain KCTC 2396).